The following is a 375-amino-acid chain: Chaperone protein DnaJ (375 aa).

In terms of domain architecture, J spans glycine 5 to glycine 70. A CR-type zinc finger spans residues glycine 142–arginine 220. Zn(2+) contacts are provided by cysteine 155, cysteine 158, cysteine 172, cysteine 175, cysteine 194, cysteine 197, cysteine 208, and cysteine 211. 4 CXXCXGXG motif repeats span residues cysteine 155–glycine 162, cysteine 172–glycine 179, cysteine 194–glycine 201, and cysteine 208–glycine 215.

This sequence belongs to the DnaJ family. Homodimer. Requires Zn(2+) as cofactor.

Its subcellular location is the cytoplasm. Functionally, participates actively in the response to hyperosmotic and heat shock by preventing the aggregation of stress-denatured proteins and by disaggregating proteins, also in an autonomous, DnaK-independent fashion. Unfolded proteins bind initially to DnaJ; upon interaction with the DnaJ-bound protein, DnaK hydrolyzes its bound ATP, resulting in the formation of a stable complex. GrpE releases ADP from DnaK; ATP binding to DnaK triggers the release of the substrate protein, thus completing the reaction cycle. Several rounds of ATP-dependent interactions between DnaJ, DnaK and GrpE are required for fully efficient folding. Also involved, together with DnaK and GrpE, in the DNA replication of plasmids through activation of initiation proteins. The sequence is that of Chaperone protein DnaJ from Leptospira biflexa serovar Patoc (strain Patoc 1 / Ames).